Consider the following 604-residue polypeptide: Elongation factor 4 (604 aa).

The region spanning 4–186 (EFIRNFSIIA…AIVHLVPPPK (183 aa)) is the tr-type G domain. Residues 16 to 21 (DHGKST) and 133 to 136 (NKID) each bind GTP.

Belongs to the TRAFAC class translation factor GTPase superfamily. Classic translation factor GTPase family. LepA subfamily.

The protein resides in the cell inner membrane. The catalysed reaction is GTP + H2O = GDP + phosphate + H(+). Its function is as follows. Required for accurate and efficient protein synthesis under certain stress conditions. May act as a fidelity factor of the translation reaction, by catalyzing a one-codon backward translocation of tRNAs on improperly translocated ribosomes. Back-translocation proceeds from a post-translocation (POST) complex to a pre-translocation (PRE) complex, thus giving elongation factor G a second chance to translocate the tRNAs correctly. Binds to ribosomes in a GTP-dependent manner. In Solibacter usitatus (strain Ellin6076), this protein is Elongation factor 4.